Consider the following 709-residue polypeptide: DNA ligase (709 aa).

NAD(+) is bound by residues 34–38 (DAEYD), 83–84 (SL), and E115. K117 functions as the N6-AMP-lysine intermediate in the catalytic mechanism. NAD(+) contacts are provided by R138, E185, K301, and K325. Zn(2+) is bound by residues C419, C422, C437, and C443. The 90-residue stretch at 602-691 (RQSDTLAGKT…AEPPPSPPPP (90 aa)) folds into the BRCT domain. The tract at residues 679 to 709 (GTTAEPPPSPPPPPPETNTDGNQLLLPLDGE) is disordered. The span at 683 to 694 (EPPPSPPPPPPE) shows a compositional bias: pro residues.

It belongs to the NAD-dependent DNA ligase family. LigA subfamily. It depends on Mg(2+) as a cofactor. Mn(2+) is required as a cofactor.

It carries out the reaction NAD(+) + (deoxyribonucleotide)n-3'-hydroxyl + 5'-phospho-(deoxyribonucleotide)m = (deoxyribonucleotide)n+m + AMP + beta-nicotinamide D-nucleotide.. Its function is as follows. DNA ligase that catalyzes the formation of phosphodiester linkages between 5'-phosphoryl and 3'-hydroxyl groups in double-stranded DNA using NAD as a coenzyme and as the energy source for the reaction. It is essential for DNA replication and repair of damaged DNA. This is DNA ligase from Chloroflexus aurantiacus (strain ATCC 29364 / DSM 637 / Y-400-fl).